The following is a 396-amino-acid chain: 1-deoxy-D-xylulose 5-phosphate reductoisomerase (396 aa).

The NADPH site is built by T17, G18, S19, I20, N47, and N130. K131 serves as a coordination point for 1-deoxy-D-xylulose 5-phosphate. Position 132 (E132) interacts with NADPH. A Mn(2+)-binding site is contributed by D156. 1-deoxy-D-xylulose 5-phosphate contacts are provided by S157, E158, S182, and H205. E158 contributes to the Mn(2+) binding site. Residue G211 participates in NADPH binding. Positions 218, 223, 224, and 227 each coordinate 1-deoxy-D-xylulose 5-phosphate. E227 is a binding site for Mn(2+).

Belongs to the DXR family. Mg(2+) is required as a cofactor. Requires Mn(2+) as cofactor.

The catalysed reaction is 2-C-methyl-D-erythritol 4-phosphate + NADP(+) = 1-deoxy-D-xylulose 5-phosphate + NADPH + H(+). It functions in the pathway isoprenoid biosynthesis; isopentenyl diphosphate biosynthesis via DXP pathway; isopentenyl diphosphate from 1-deoxy-D-xylulose 5-phosphate: step 1/6. In terms of biological role, catalyzes the NADPH-dependent rearrangement and reduction of 1-deoxy-D-xylulose-5-phosphate (DXP) to 2-C-methyl-D-erythritol 4-phosphate (MEP). This Rhizobium etli (strain CIAT 652) protein is 1-deoxy-D-xylulose 5-phosphate reductoisomerase.